We begin with the raw amino-acid sequence, 164 residues long: Large ribosomal subunit protein uL10 (164 aa).

The protein belongs to the universal ribosomal protein uL10 family. In terms of assembly, part of the ribosomal stalk of the 50S ribosomal subunit. The N-terminus interacts with L11 and the large rRNA to form the base of the stalk. The C-terminus forms an elongated spine to which L12 dimers bind in a sequential fashion forming a multimeric L10(L12)X complex.

Its function is as follows. Forms part of the ribosomal stalk, playing a central role in the interaction of the ribosome with GTP-bound translation factors. This is Large ribosomal subunit protein uL10 from Photobacterium profundum (strain SS9).